Reading from the N-terminus, the 126-residue chain is Large ribosomal subunit protein eL18 (126 aa).

Belongs to the eukaryotic ribosomal protein eL18 family.

The polypeptide is Large ribosomal subunit protein eL18 (Methanosarcina mazei (strain ATCC BAA-159 / DSM 3647 / Goe1 / Go1 / JCM 11833 / OCM 88) (Methanosarcina frisia)).